Reading from the N-terminus, the 556-residue chain is Arginine--tRNA ligase (556 aa).

A 'HIGH' region motif is present at residues 132–142; sequence ANPTGNLHLGH.

Belongs to the class-I aminoacyl-tRNA synthetase family. In terms of assembly, monomer.

It is found in the cytoplasm. It catalyses the reaction tRNA(Arg) + L-arginine + ATP = L-arginyl-tRNA(Arg) + AMP + diphosphate. This chain is Arginine--tRNA ligase, found in Bacillus licheniformis (strain ATCC 14580 / DSM 13 / JCM 2505 / CCUG 7422 / NBRC 12200 / NCIMB 9375 / NCTC 10341 / NRRL NRS-1264 / Gibson 46).